The following is a 214-amino-acid chain: Thiamine-phosphate synthase (214 aa).

Residues 39 to 43 and N71 each bind 4-amino-2-methyl-5-(diphosphooxymethyl)pyrimidine; that span reads QYRFK. Residues D72 and D91 each coordinate Mg(2+). S110 lines the 4-amino-2-methyl-5-(diphosphooxymethyl)pyrimidine pocket. 136 to 138 is a 2-[(2R,5Z)-2-carboxy-4-methylthiazol-5(2H)-ylidene]ethyl phosphate binding site; sequence TKT. Residue K139 coordinates 4-amino-2-methyl-5-(diphosphooxymethyl)pyrimidine. 2-[(2R,5Z)-2-carboxy-4-methylthiazol-5(2H)-ylidene]ethyl phosphate-binding positions include G166 and 186-187; that span reads VS.

The protein belongs to the thiamine-phosphate synthase family. It depends on Mg(2+) as a cofactor.

It catalyses the reaction 2-[(2R,5Z)-2-carboxy-4-methylthiazol-5(2H)-ylidene]ethyl phosphate + 4-amino-2-methyl-5-(diphosphooxymethyl)pyrimidine + 2 H(+) = thiamine phosphate + CO2 + diphosphate. The catalysed reaction is 2-(2-carboxy-4-methylthiazol-5-yl)ethyl phosphate + 4-amino-2-methyl-5-(diphosphooxymethyl)pyrimidine + 2 H(+) = thiamine phosphate + CO2 + diphosphate. The enzyme catalyses 4-methyl-5-(2-phosphooxyethyl)-thiazole + 4-amino-2-methyl-5-(diphosphooxymethyl)pyrimidine + H(+) = thiamine phosphate + diphosphate. The protein operates within cofactor biosynthesis; thiamine diphosphate biosynthesis; thiamine phosphate from 4-amino-2-methyl-5-diphosphomethylpyrimidine and 4-methyl-5-(2-phosphoethyl)-thiazole: step 1/1. In terms of biological role, condenses 4-methyl-5-(beta-hydroxyethyl)thiazole monophosphate (THZ-P) and 2-methyl-4-amino-5-hydroxymethyl pyrimidine pyrophosphate (HMP-PP) to form thiamine monophosphate (TMP). This Hydrogenobaculum sp. (strain Y04AAS1) protein is Thiamine-phosphate synthase.